Consider the following 187-residue polypeptide: 5-formyltetrahydrofolate cyclo-ligase (187 aa).

Residues 6-10 (RQQIR), 139-146 (GMGGGFYD), and Asp-178 contribute to the ATP site.

The protein belongs to the 5-formyltetrahydrofolate cyclo-ligase family.

The enzyme catalyses (6S)-5-formyl-5,6,7,8-tetrahydrofolate + ATP = (6R)-5,10-methenyltetrahydrofolate + ADP + phosphate. It functions in the pathway one-carbon metabolism; tetrahydrofolate interconversion. Involved in the removal of 5-formyltetrahydrofolate. In vitro, it is a potent inhibitor of various folate-dependent enzymes in the C1 metabolism network and in vivo it might function as a folate storage. 5-formyltetrahydrofolate is also used as an antifolate rescue agent in cancer chemotherapy. Catalyzes the irreversible ATP-dependent transformation of 5-formyltetrahydrofolate (5-CHO-THF) to form 5,10-methenyltetrahydrofolate (5,10-CH=THF). The reverse reaction is catalyzed by the serine hydroxymethyltransferase GlyA (SHMT). The protein is 5-formyltetrahydrofolate cyclo-ligase of Haemophilus influenzae (strain ATCC 51907 / DSM 11121 / KW20 / Rd).